Reading from the N-terminus, the 205-residue chain is Protein Rcp (205 aa).

Belongs to the NAD(P)-dependent epimerase/dehydratase family.

The protein is Protein Rcp (rcp) of Vibrio cholerae serotype O1 (strain ATCC 39315 / El Tor Inaba N16961).